Reading from the N-terminus, the 450-residue chain is Phosphoglucosamine mutase (450 aa).

Residue serine 101 is the Phosphoserine intermediate of the active site. The Mg(2+) site is built by serine 101, aspartate 242, aspartate 244, and aspartate 246. Phosphoserine is present on serine 101.

Belongs to the phosphohexose mutase family. The cofactor is Mg(2+). Post-translationally, activated by phosphorylation.

The enzyme catalyses alpha-D-glucosamine 1-phosphate = D-glucosamine 6-phosphate. Catalyzes the conversion of glucosamine-6-phosphate to glucosamine-1-phosphate. The chain is Phosphoglucosamine mutase from Rhodopseudomonas palustris (strain BisA53).